We begin with the raw amino-acid sequence, 358 residues long: uncharacterized protein (358 aa).

Belongs to the SMP-30/CGR1 family.

This is an uncharacterized protein from Saccharomyces cerevisiae (strain ATCC 204508 / S288c) (Baker's yeast).